Here is a 489-residue protein sequence, read N- to C-terminus: MASEQPVEAAPTGGSLADRITKPDESNTSETPAPIGDQTDGAPAQLGGSDLHEPEYNVEVKLSDLQADPNNPLYSVKNFEDLGLDPRILKGLSSMNFRKPSKIQERALPLLLNNPPKNLVGQSQSGTGKTAAFVLNALSRVDLSTEQMQKTPQALILAPTRELARQILGVVQVMGQFVDGLIIGAAVPTDRDSRPKRLECSIVVGTPGTVGDMIKRRTFIPNKLKVLVLDEADNMLDQQGLGDQCIRVKALLPRDIQVVLFSATFPEHVHQYASKFAPNANEITLQHEELTVEGIKQLYLDCADGEDKYRTLVQLYGLLTVGSSIIFVQTRAAAQEIERRMTAEGHTVVSLTGERDPSVRDAIIDQFRRGEAKVLIATNVLARGIDVSTVSMVINYDIPELHQPNVPGRQADFQTYLHRIGRTGRFGRVGVSISFVSNREEWEMLNQIQTYFNCEIQRVDTKDWDEVEDIIKKTIKNSRANPKFAGGKD.

Residues 1–51 (MASEQPVEAAPTGGSLADRITKPDESNTSETPAPIGDQTDGAPAQLGGSDL) are disordered. The Q motif signature appears at 77-105 (KNFEDLGLDPRILKGLSSMNFRKPSKIQE). The Helicase ATP-binding domain occupies 110 to 283 (LLLNNPPKNL…SKFAPNANEI (174 aa)). 123-130 (SQSGTGKT) is an ATP binding site. The DEAD box signature appears at 230–233 (DEAD). A Helicase C-terminal domain is found at 311 to 467 (TLVQLYGLLT…RVDTKDWDEV (157 aa)).

Belongs to the DEAD box helicase family. DDX19/DBP5 subfamily. In terms of assembly, associates with the nuclear pore complex.

The protein localises to the cytoplasm. Its subcellular location is the nucleus. The protein resides in the nuclear pore complex. It localises to the nucleus membrane. It carries out the reaction ATP + H2O = ADP + phosphate + H(+). Its function is as follows. ATP-dependent RNA helicase associated with the nuclear pore complex and essential for mRNA export from the nucleus. May participate in a terminal step of mRNA export through the removal of proteins that accompany mRNA through the nucleopore complex. May also be involved in early transcription. In Aspergillus fumigatus (strain ATCC MYA-4609 / CBS 101355 / FGSC A1100 / Af293) (Neosartorya fumigata), this protein is ATP-dependent RNA helicase dbp5 (dbp5).